The chain runs to 551 residues: Tripartite motif-containing protein 5 (551 aa).

At Ala2 the chain carries N-acetylalanine. Residues 15-55 (CPICLELLTEPLSLDCGHSFCQACITANHKESRERSCPLCR) form an RING-type zinc finger. Ser82 carries the phosphoserine modification. The segment at 87–128 (QKVDRCARHGEKLLLFCQQHGNVICWLCERSEEHRGHRTSLV) adopts a B box-type zinc-finger fold. Positions 92, 95, 114, and 120 each coordinate Zn(2+). Positions 127 to 221 (LVEEVAQKYR…VQSENDMVLQ (95 aa)) form a coiled coil. Residues 182-195 (FKQLRDILDCEESN) are required for interaction with GABARAP and for autophagy. Residues 276 to 551 (PDLKGMLQVF…LPMTLCSPSS (276 aa)) enclose the B30.2/SPRY domain.

It belongs to the TRIM/RBCC family. Can form homodimers and homotrimers. In addition to lower-order dimerization, also exhibits a higher-order multimerization and both low- and high-order multimerizations are essential for its restriction activity. Interacts with BTBD1 and BTBD2. Interacts with PSMC4, PSMC5, PSMD7 and HSPA8/HSC70. Interacts (via B30.2/SPRY domain) with HSPA1A/B. Interacts with PSMC2, MAP3K7/TAK1, TAB2 and TAB3. Interacts with SQSTM1. Interacts with TRIM6 and TRIM34. Interacts with ULK1 (phosphorylated form), GABARAP, GABARAPL1, GABARAPL2, MAP1LC3A, MAP1LC3C and BECN1. Post-translationally, degraded in a proteasome-independent fashion in the absence of viral infection but in a proteasome-dependent fashion following exposure to restriction sensitive virus. Autoubiquitinated in a RING finger- and UBE2D2-dependent manner. Monoubiquitinated by TRIM21. Deubiquitinated by Yersinia YopJ. Ubiquitination may not lead to proteasomal degradation.

The protein resides in the cytoplasm. It localises to the nucleus. The catalysed reaction is S-ubiquitinyl-[E2 ubiquitin-conjugating enzyme]-L-cysteine + [acceptor protein]-L-lysine = [E2 ubiquitin-conjugating enzyme]-L-cysteine + N(6)-ubiquitinyl-[acceptor protein]-L-lysine.. Its pathway is protein modification; protein ubiquitination. In terms of biological role, capsid-specific restriction factor that prevents infection from non-host-adapted retroviruses. Blocks viral replication early in the life cycle, after viral entry but before reverse transcription. In addition to acting as a capsid-specific restriction factor, also acts as a pattern recognition receptor that activates innate immune signaling in response to the retroviral capsid lattice. Binding to the viral capsid triggers its E3 ubiquitin ligase activity, and in concert with the heterodimeric ubiquitin conjugating enzyme complex UBE2V1-UBE2N (also known as UBC13-UEV1A complex) generates 'Lys-63'-linked polyubiquitin chains, which in turn are catalysts in the autophosphorylation of the MAP3K7/TAK1 complex (includes TAK1, TAB2, and TAB3). Activation of the MAP3K7/TAK1 complex by autophosphorylation results in the induction and expression of NF-kappa-B and MAPK-responsive inflammatory genes, thereby leading to an innate immune response in the infected cell. Plays a role in regulating autophagy through activation of autophagy regulator BECN1 by causing its dissociation from its inhibitors BCL2 and TAB2. This chain is Tripartite motif-containing protein 5 (TRIM5), found in Alouatta sara (Bolivian red howler monkey).